The chain runs to 298 residues: Small ribosomal subunit protein uS2 (298 aa).

The interval 272 to 298 (EGGDWAASSAAPAGESWAEAQPTEAKW) is disordered.

Belongs to the universal ribosomal protein uS2 family. Component of the small ribosomal subunit. Mature ribosomes consist of a small (40S) and a large (60S) subunit. The 40S subunit contains about 33 different proteins and 1 molecule of RNA (18S). The 60S subunit contains about 49 different proteins and 3 molecules of RNA (25S, 5.8S and 5S). Interacts with rps21.

The protein resides in the cytoplasm. Required for the assembly and/or stability of the 40S ribosomal subunit. Required for the processing of the 20S rRNA-precursor to mature 18S rRNA in a late step of the maturation of 40S ribosomal subunits. The polypeptide is Small ribosomal subunit protein uS2 (rps0) (Aspergillus niger (strain ATCC MYA-4892 / CBS 513.88 / FGSC A1513)).